The chain runs to 380 residues: MNTQLPPKQRIVVGLSGGVDSAVSAWLLKQQGHEVVAIFMKNWEDDDDSEFCSSRQDFLDAASVADVLGIEIEHVNFAAEYKDRVFAEFLREYSAGRTPNPDVLCNAEIKFKAFLDHAMRLGADRIATGHYARVRHNPATGLHELLKGLDPLKDQSYFLHRLNQAQLASTLFPVGELPKTEVRRIALEIGLPNAKKKDSTGICFIGERPFREFLNRYLSHEPGPIKDDRGRRIGEHVGLSFYTLGQRKGIGIGGLKEKGAPRGGGEHEPWFVARKDLASNTLYAVQGHDHPWLQSQRLSADDASWIGTVPQPGQGGLAAKTRYRQADSACAVDALDAAARTLSMSFPAPQWAVTPGQSVVLYEGEVCLGGAVIAAADQRA.

ATP contacts are provided by residues 14 to 21 (GLSGGVDS) and methionine 40. Residues 100 to 102 (NPD) form an interaction with target base in tRNA region. Residue cysteine 105 is the Nucleophile of the active site. An intrachain disulfide couples cysteine 105 to cysteine 203. Glycine 129 provides a ligand contact to ATP. Positions 153–155 (KDQ) are interaction with tRNA. The Cysteine persulfide intermediate role is filled by cysteine 203. Residues 322-323 (RY) are interaction with tRNA.

This sequence belongs to the MnmA/TRMU family.

Its subcellular location is the cytoplasm. It catalyses the reaction S-sulfanyl-L-cysteinyl-[protein] + uridine(34) in tRNA + AH2 + ATP = 2-thiouridine(34) in tRNA + L-cysteinyl-[protein] + A + AMP + diphosphate + H(+). Catalyzes the 2-thiolation of uridine at the wobble position (U34) of tRNA, leading to the formation of s(2)U34. The protein is tRNA-specific 2-thiouridylase MnmA of Leptothrix cholodnii (strain ATCC 51168 / LMG 8142 / SP-6) (Leptothrix discophora (strain SP-6)).